Reading from the N-terminus, the 289-residue chain is EISLNGYGRFGLQYVEDRGVGLEDTIISSRLRINIVGTTETDQGVTFGAKLRMQWDDGDAFAGTAGNAAQFWTSYNGVTVSVGNVDTAFDSVALTYDSEMGYEASSFGDAQSSFFAYNSKYDASGALDNYNGIAVTYSISGVNLYLSYVDPDQTVDSSLVTEEFGIAADWSNDMISLAAAYTTDAGGIVDNDIAFVGAAYKFNDAGTVGLNWYDNGLSTAGDQVTLYGNYAFGATTVRAYVSDIDRAGADTAYGIGADYQFAEGVKVSGSVQSGFANETVADVGVRFDF.

Homotrimer.

Its subcellular location is the cell outer membrane. Its function is as follows. Forms channels that allow the passive diffusion of small hydrophilic solutes up to an exclusion limit of about 0.6 kDa. The protein is Porin (opmA) of Fuscovulum blasticum (Rhodobacter blasticus).